A 583-amino-acid chain; its full sequence is uncharacterized protein (583 aa).

The region spanning 162 to 424 (YGIFAAPILD…RGVQQNPFAK (263 aa)) is the FAD-binding FR-type domain.

Belongs to the flavoprotein pyridine nucleotide cytochrome reductase family. FAD is required as a cofactor.

Its subcellular location is the mitochondrion. This is an uncharacterized protein from Schizosaccharomyces pombe (strain 972 / ATCC 24843) (Fission yeast).